Here is a 255-residue protein sequence, read N- to C-terminus: Hydroxyacylglutathione hydrolase (255 aa).

His-55, His-57, Asp-59, His-60, His-112, Asp-129, and His-167 together coordinate Zn(2+).

This sequence belongs to the metallo-beta-lactamase superfamily. Glyoxalase II family. Monomer. The cofactor is Zn(2+).

The catalysed reaction is an S-(2-hydroxyacyl)glutathione + H2O = a 2-hydroxy carboxylate + glutathione + H(+). Its pathway is secondary metabolite metabolism; methylglyoxal degradation; (R)-lactate from methylglyoxal: step 2/2. Its function is as follows. Thiolesterase that catalyzes the hydrolysis of S-D-lactoyl-glutathione to form glutathione and D-lactic acid. This is Hydroxyacylglutathione hydrolase from Halorhodospira halophila (strain DSM 244 / SL1) (Ectothiorhodospira halophila (strain DSM 244 / SL1)).